We begin with the raw amino-acid sequence, 78 residues long: MSEVVVKEQLEQYISKIERLEQEKADLSQEVKDIFQDASSHGFDVKAMKSILKLKKLDKDKLAEQDAMLELYRDTLGI.

This sequence belongs to the UPF0335 family.

In Rickettsia peacockii (strain Rustic), this protein is UPF0335 protein RPR_04100.